Consider the following 91-residue polypeptide: UPF0250 protein PputW619_0619 (91 aa).

It belongs to the UPF0250 family.

The chain is UPF0250 protein PputW619_0619 from Pseudomonas putida (strain W619).